Here is a 470-residue protein sequence, read N- to C-terminus: MKLALHRIAGATMAALTTEVQYLGSNDASYEDPQADAALMKSRFNFEKPYSASSSLHRLIPGNKELIYGGLSTILPTNASDFPLSNGSGEATQCGEDIVDNMECFMILTPAQQLVIVILAITLGTFTVLENFVVLCVILHSHTLRSRPSYHFIGSLAVADLIGSIIFVYSFLDFHVLHRKDSPSIFLFKLAGVIASFTASVGSLFLTAIDRYVSIHRPMAYKRIITKTKAVIAFSVMWAISIEFSLLPLLGWNCKRLHSVCSDIFPLIDEKYLMFWIGMTTVLLLFIIYAYMFILWKSHHHAVRMLSRSSQRSIIVYTSEGTKVQTVRPEQARMDLRLAKTLVLILVALIICWGPLLAIMVYDLFGRVNDFIKTVFAFCSMLCLLNSTINPVIYAMRSKDLRRAFVNICHMCRGTTQSLDSSAESDWNSRSVRSTGGRAGKDRSVGGKPQVKVAQVTVSGVTASSPAEAV.

Topologically, residues 1–113 (MKLALHRIAG…CFMILTPAQQ (113 aa)) are extracellular. N-linked (GlcNAc...) asparagine glycosylation is found at Asn78 and Asn86. A helical membrane pass occupies residues 114 to 139 (LVIVILAITLGTFTVLENFVVLCVIL). Residues 140 to 151 (HSHTLRSRPSYH) lie on the Cytoplasmic side of the membrane. The helical transmembrane segment at 152-172 (FIGSLAVADLIGSIIFVYSFL) threads the bilayer. The Extracellular segment spans residues 173–184 (DFHVLHRKDSPS). A helical transmembrane segment spans residues 185–209 (IFLFKLAGVIASFTASVGSLFLTAI). The Cytoplasmic portion of the chain corresponds to 210 to 229 (DRYVSIHRPMAYKRIITKTK). Residues 230-252 (AVIAFSVMWAISIEFSLLPLLGW) traverse the membrane as a helical segment. Residues 253-270 (NCKRLHSVCSDIFPLIDE) are Extracellular-facing. A helical membrane pass occupies residues 271 to 296 (KYLMFWIGMTTVLLLFIIYAYMFILW). Residues 297 to 341 (KSHHHAVRMLSRSSQRSIIVYTSEGTKVQTVRPEQARMDLRLAKT) lie on the Cytoplasmic side of the membrane. The chain crosses the membrane as a helical span at residues 342 to 362 (LVLILVALIICWGPLLAIMVY). Over 363-374 (DLFGRVNDFIKT) the chain is Extracellular. Residues 375–396 (VFAFCSMLCLLNSTINPVIYAM) form a helical membrane-spanning segment. Over 397–470 (RSKDLRRAFV…VTASSPAEAV (74 aa)) the chain is Cytoplasmic. Cys412 carries the S-palmitoyl cysteine lipid modification. Over residues 418 to 434 (SLDSSAESDWNSRSVRS) the composition is skewed to polar residues. A disordered region spans residues 418–450 (SLDSSAESDWNSRSVRSTGGRAGKDRSVGGKPQ).

The protein belongs to the G-protein coupled receptor 1 family. In terms of processing, palmitoylation at Cys-412 is important for recruitment at both plasma membrane and lipid rafts and association with G protein alpha subunits.

It localises to the cell membrane. The protein localises to the mitochondrion outer membrane. It is found in the cell projection. Its subcellular location is the axon. The protein resides in the presynapse. Functionally, G-protein coupled receptor for cannabinoids. Mediates many cannabinoid-induced effects in the central nervous system (CNS), as well as in peripheral tissues. Regulates cellular respiration and energy production in response to cannabinoids. Signaling typically involves reduction in cyclic AMP. The protein is Cannabinoid receptor type 1B (cnr1b) of Takifugu rubripes (Japanese pufferfish).